Reading from the N-terminus, the 108-residue chain is NADH dehydrogenase [ubiquinone] 1 alpha subcomplex subunit 8-A (108 aa).

2 CHCH domains span residues G28–L69 and H70–K108. 3 short sequence motifs (cx9C motif) span residues C31–C41, C51–C61, and C73–C83. Disulfide bonds link C31/C61, C41/C51, C73/C105, and C83/C94. Residues C94 to C105 carry the Cx10C motif motif.

Belongs to the complex I NDUFA8 subunit family. In terms of assembly, complex I is composed of at least 49 different subunits.

The protein resides in the mitochondrion. The protein localises to the mitochondrion intermembrane space. Its function is as follows. Accessory subunit of the mitochondrial membrane respiratory chain NADH dehydrogenase (Complex I), that is believed not to be involved in catalysis. Complex I functions in the transfer of electrons from NADH to the respiratory chain. The immediate electron acceptor for the enzyme is believed to be ubiquinone. The polypeptide is NADH dehydrogenase [ubiquinone] 1 alpha subcomplex subunit 8-A (Arabidopsis thaliana (Mouse-ear cress)).